Here is a 149-residue protein sequence, read N- to C-terminus: General odorant-binding protein 99b (149 aa).

Residues 1 to 16 form the signal peptide; sequence MKVLIVLLLGLAFVLA. Cystine bridges form between Cys40/Cys71, Cys67/Cys125, and Cys114/Cys134.

The protein belongs to the PBP/GOBP family. Expressed in adult olfactory system. Expressed in subsets of sensilla in both olfactory organs, the maxillary palps, and third antennal segments.

Its subcellular location is the secreted. In terms of biological role, present in the aqueous fluid surrounding olfactory sensory dendrites and are thought to aid in the capture and transport of hydrophobic odorants into and through this fluid. This chain is General odorant-binding protein 99b (Obp99b), found in Drosophila melanogaster (Fruit fly).